The following is a 155-amino-acid chain: Small ribosomal subunit protein bS6 (155 aa).

Residues 94–155 (VKQEGPLPTP…TPELEEQVKS (62 aa)) are disordered. The segment covering 103 to 112 (PRSSNKSSNQ) has biased composition (polar residues). Over residues 113-141 (AEKKENENIDSANKSEPKADETDNKKKIT) the composition is skewed to basic and acidic residues.

Belongs to the bacterial ribosomal protein bS6 family.

In terms of biological role, binds together with bS18 to 16S ribosomal RNA. This Prochlorococcus marinus (strain MIT 9515) protein is Small ribosomal subunit protein bS6.